We begin with the raw amino-acid sequence, 659 residues long: Nitrate import ATP-binding protein NrtC (659 aa).

The ABC transporter domain maps to 5–239; sequence LAVDHVHQVF…RPRQRLEMME (235 aa). Residue 42-49 coordinates ATP; sequence GHSGCGKS. The tract at residues 255 to 278 is linker; sequence QQQRRAKRRAKAAAPAPAVAASQQ. Residues 279–659 form a nrtA-like region; that stretch reads KTVRLGFLPG…VAPIPLATSA (381 aa).

It belongs to the ABC transporter superfamily. Nitrate/nitrite/cyanate uptake transporter (NitT) (TC 3.A.1.16) family. In terms of assembly, the complex is composed of two ATP-binding proteins (NrtC and NrtD), two transmembrane proteins (NrtB) and a solute-binding protein (NrtA).

Its subcellular location is the cell inner membrane. It carries out the reaction nitrate(out) + ATP + H2O = nitrate(in) + ADP + phosphate + H(+). Its activity is regulated as follows. Transport is inhibited by ammonium. The C-terminal domain of NrtC is involved in the ammonium-promoted inhibition of the nitrate/nitrite transporter. In terms of biological role, part of the ABC transporter complex NrtABCD involved in nitrate uptake. The complex is probably also involved in nitrite transport. Probably responsible for energy coupling to the transport system. The chain is Nitrate import ATP-binding protein NrtC from Synechococcus elongatus (strain ATCC 33912 / PCC 7942 / FACHB-805) (Anacystis nidulans R2).